A 139-amino-acid chain; its full sequence is MATNRTFTMIKPDGVQNGHIGGIVNMITEAGFKIVSMKLTQLTVADAQKFYEVHAARPFYGELVAFMSRGPIVAAILEKDNAVEDFRTLIGATNPADAAEGTIRKKYATSIGENAVHGSDSDENAAIEGAFHFAGREQF.

Residues K11, F59, R87, T93, R104, and N114 each contribute to the ATP site. Catalysis depends on H117, which acts as the Pros-phosphohistidine intermediate.

The protein belongs to the NDK family. In terms of assembly, homotetramer. The cofactor is Mg(2+).

The protein resides in the cytoplasm. It carries out the reaction a 2'-deoxyribonucleoside 5'-diphosphate + ATP = a 2'-deoxyribonucleoside 5'-triphosphate + ADP. The catalysed reaction is a ribonucleoside 5'-diphosphate + ATP = a ribonucleoside 5'-triphosphate + ADP. Its function is as follows. Major role in the synthesis of nucleoside triphosphates other than ATP. The ATP gamma phosphate is transferred to the NDP beta phosphate via a ping-pong mechanism, using a phosphorylated active-site intermediate. This Flavobacterium psychrophilum (strain ATCC 49511 / DSM 21280 / CIP 103535 / JIP02/86) protein is Nucleoside diphosphate kinase.